We begin with the raw amino-acid sequence, 38 residues long: Conotoxin r7a (38 aa).

The propeptide occupies Ala1 to Arg5. Trp6 bears the 6'-bromotryptophan mark. A 4-carboxyglutamate mark is found at Glu10 and Glu11. 3 cysteine pairs are disulfide-bonded: Cys12–Cys26, Cys19–Cys30, and Cys25–Cys35. Trp15 is subject to 6'-bromotryptophan. Glu20 and Glu31 each carry 4-carboxyglutamate. Trp38 is modified (6'-bromotryptophan).

Belongs to the conotoxin O2 superfamily. As to expression, expressed by the venom duct.

It localises to the secreted. In terms of biological role, induces a sleep-like state in mice. The polypeptide is Conotoxin r7a (Conus radiatus (Rayed cone)).